We begin with the raw amino-acid sequence, 241 residues long: Uridylate kinase (241 aa).

12 to 15 contacts ATP; the sequence is KISG. Positions 20-25 are involved in allosteric activation by GTP; that stretch reads GDKGNG. Glycine 54 lines the UMP pocket. 2 residues coordinate ATP: glycine 55 and arginine 59. UMP contacts are provided by residues aspartate 74 and 135–142; that span reads TGNPYFST. The ATP site is built by asparagine 163, tyrosine 169, and aspartate 172.

This sequence belongs to the UMP kinase family. Homohexamer.

The protein resides in the cytoplasm. It catalyses the reaction UMP + ATP = UDP + ADP. Its pathway is pyrimidine metabolism; CTP biosynthesis via de novo pathway; UDP from UMP (UMPK route): step 1/1. With respect to regulation, allosterically activated by GTP. Inhibited by UTP. In terms of biological role, catalyzes the reversible phosphorylation of UMP to UDP. This chain is Uridylate kinase, found in Lactobacillus helveticus (strain DPC 4571).